The primary structure comprises 235 residues: Regulator of G-protein signaling 18 (235 aa).

Phosphoserine is present on Ser-49. One can recognise an RGS domain in the interval 86 to 202 (SFDKLLSHRD…LKSEIYLHLI (117 aa)). 2 positions are modified to phosphoserine: Ser-216 and Ser-218.

The protein resides in the cytoplasm. Inhibits signal transduction by increasing the GTPase activity of G protein alpha subunits thereby driving them into their inactive GDP-bound form. Binds to G(i) alpha-1, G(i) alpha-2, G(i) alpha-3 and G(q) alpha. The chain is Regulator of G-protein signaling 18 (Rgs18) from Rattus norvegicus (Rat).